Consider the following 149-residue polypeptide: Large ribosomal subunit protein bL9 (149 aa).

It belongs to the bacterial ribosomal protein bL9 family.

Functionally, binds to the 23S rRNA. The polypeptide is Large ribosomal subunit protein bL9 (Haemophilus ducreyi (strain 35000HP / ATCC 700724)).